The chain runs to 246 residues: tRNA (guanine-N(1)-)-methyltransferase (246 aa).

S-adenosyl-L-methionine-binding positions include glycine 112 and 131-136 (IGDYVL).

The protein belongs to the RNA methyltransferase TrmD family. In terms of assembly, homodimer.

The protein resides in the cytoplasm. It carries out the reaction guanosine(37) in tRNA + S-adenosyl-L-methionine = N(1)-methylguanosine(37) in tRNA + S-adenosyl-L-homocysteine + H(+). Specifically methylates guanosine-37 in various tRNAs. The polypeptide is tRNA (guanine-N(1)-)-methyltransferase (Thermosipho africanus (strain TCF52B)).